A 1254-amino-acid chain; its full sequence is Zinc finger protein BRUTUS (1254 aa).

Residues 1–40 (MATPLPDFETARGGGAVASSSTTVLPSSVSSSSSSSRPLP) are disordered. Low complexity predominate over residues 19–40 (SSSTTVLPSSVSSSSSSSRPLP). Residues 201–221 (FLCSIPVNMLAVFLPWISSSI) traverse the membrane as a helical segment. The disordered stretch occupies residues 893–913 (GSPDSSSTETSKPSPQKDNDH). Residues 895 to 906 (PDSSSTETSKPS) show a composition bias toward polar residues. A CHY-type zinc finger spans residues 999–1068 (PEKQIYGCEH…PICTTPSCDG (70 aa)). 24 residues coordinate Zn(2+): cysteine 1006, histidine 1008, cysteine 1019, cysteine 1020, cysteine 1026, cysteine 1029, histidine 1030, histidine 1036, cysteine 1048, cysteine 1051, cysteine 1061, cysteine 1066, cysteine 1076, cysteine 1079, histidine 1090, cysteine 1091, cysteine 1094, cysteine 1097, histidine 1109, cysteine 1110, cysteine 1113, cysteine 1116, histidine 1124, and cysteine 1126. The CTCHY-type zinc-finger motif lies at 1071 to 1134 (MAKHYCSICK…KCLEKSLETN (64 aa)). An RING-type; atypical zinc finger spans residues 1135-1176 (CPICCEFLFTSSEAVRALPCGHYMHSACFQAYTCSHYTCPIC).

As to quaternary structure, interacts with the PYEL proteins bHLH115, bHLH104 and ILR3 in the nucleus. Binds zinc and iron ions. Expressed in cotyledons of seedlings, young leaves, developing and mature embryos, and other reproductive tissues including floral vasculature, funiculus, septum, and gynoecium valves.

The protein localises to the membrane. It is found in the nucleus. It participates in protein modification; protein ubiquitination. In terms of biological role, essential protein. Negatively regulates the response to iron deficiency and thus contributes to iron homeostasis. Exhibits E3 ubiquitin-protein ligase activity in vitro. Plays a role in root growth, rhizosphere acidification, and iron reductase activity in response to iron deprivation. Facilitates 26S proteasome-mediated degradation of PYEL proteins in the absence of iron. This is Zinc finger protein BRUTUS from Arabidopsis thaliana (Mouse-ear cress).